The chain runs to 183 residues: Ribosome rescue factor SmrB (183 aa).

The 76-residue stretch at 98-173 (LDLHGLTQLQ…GDAALLVLIE (76 aa)) folds into the Smr domain.

This sequence belongs to the SmrB family. As to quaternary structure, associates with collided ribosomes, but not with correctly translating polysomes.

Functionally, acts as a ribosome collision sensor. Detects stalled/collided disomes (pairs of ribosomes where the leading ribosome is stalled and a second ribosome has collided with it) and endonucleolytically cleaves mRNA at the 5' boundary of the stalled ribosome. Stalled/collided disomes form a new interface (primarily via the 30S subunits) that binds SmrB. Cleaved mRNA becomes available for tmRNA ligation, leading to ribosomal subunit dissociation and rescue of stalled ribosomes. The protein is Ribosome rescue factor SmrB of Escherichia coli (strain 55989 / EAEC).